The chain runs to 258 residues: Distal membrane-arm assembly complex protein 2 (258 aa).

This sequence belongs to the ATP synthase subunit s family. In terms of assembly, interacts with incompletely assembled mitochondrial NADH:ubiquinone oxidoreductase complex (complex I).

It is found in the mitochondrion. In terms of biological role, required for the assembly of the mitochondrial NADH:ubiquinone oxidoreductase complex (complex I). Involved in the assembly of the distal region of complex I. This Mus musculus (Mouse) protein is Distal membrane-arm assembly complex protein 2 (Dmac2).